The chain runs to 277 residues: Diaminopimelate epimerase (277 aa).

3 residues coordinate substrate: Asn15, Gln48, and Asn66. Catalysis depends on Cys75, which acts as the Proton donor. Residues 76–77 (GN), Asn156, Asn189, and 207–208 (ER) each bind substrate. Cys216 functions as the Proton acceptor in the catalytic mechanism. 217–218 (GS) contacts substrate.

This sequence belongs to the diaminopimelate epimerase family. Homodimer.

The protein localises to the cytoplasm. It carries out the reaction (2S,6S)-2,6-diaminopimelate = meso-2,6-diaminopimelate. Its pathway is amino-acid biosynthesis; L-lysine biosynthesis via DAP pathway; DL-2,6-diaminopimelate from LL-2,6-diaminopimelate: step 1/1. Functionally, catalyzes the stereoinversion of LL-2,6-diaminopimelate (L,L-DAP) to meso-diaminopimelate (meso-DAP), a precursor of L-lysine and an essential component of the bacterial peptidoglycan. This Acidiphilium cryptum (strain JF-5) protein is Diaminopimelate epimerase.